We begin with the raw amino-acid sequence, 205 residues long: Holliday junction branch migration complex subunit RuvA (205 aa).

Residues 1-64 (MIGRLRGVLI…EDAQLLYGFI (64 aa)) form a domain I region. Residues 65–143 (TKQERSLFRL…SLMEASVGSE (79 aa)) are domain II. The tract at residues 144-156 (REFVLQSNYSPAP) is flexible linker. The segment at 157 to 205 (TVNSAEEDAISALISLGYKPPQASKAVSAAYKEGMDSETLIKAALKSML) is domain III.

This sequence belongs to the RuvA family. Homotetramer. Forms an RuvA(8)-RuvB(12)-Holliday junction (HJ) complex. HJ DNA is sandwiched between 2 RuvA tetramers; dsDNA enters through RuvA and exits via RuvB. An RuvB hexamer assembles on each DNA strand where it exits the tetramer. Each RuvB hexamer is contacted by two RuvA subunits (via domain III) on 2 adjacent RuvB subunits; this complex drives branch migration. In the full resolvosome a probable DNA-RuvA(4)-RuvB(12)-RuvC(2) complex forms which resolves the HJ.

Its subcellular location is the cytoplasm. Functionally, the RuvA-RuvB-RuvC complex processes Holliday junction (HJ) DNA during genetic recombination and DNA repair, while the RuvA-RuvB complex plays an important role in the rescue of blocked DNA replication forks via replication fork reversal (RFR). RuvA specifically binds to HJ cruciform DNA, conferring on it an open structure. The RuvB hexamer acts as an ATP-dependent pump, pulling dsDNA into and through the RuvAB complex. HJ branch migration allows RuvC to scan DNA until it finds its consensus sequence, where it cleaves and resolves the cruciform DNA. This is Holliday junction branch migration complex subunit RuvA from Shewanella sp. (strain MR-7).